Reading from the N-terminus, the 579-residue chain is Glypican-2 (579 aa).

Residues 1 to 21 form the signal peptide; that stretch reads MSALRPLLLLLLHLCPGLGPG. O-linked (Xyl...) (heparan sulfate) serine glycosylation is found at Ser55, Ser92, and Ser155. Disordered stretches follow at residues 347–382 and 483–552; these read GTPHPVQSRSRRAPAPREEASRSWRASAEEERPTTA and ALGQ…GRSR. Over residues 361–379 the composition is skewed to basic and acidic residues; the sequence is APREEASRSWRASAEEERP. Residues Ser498 and Ser500 are each glycosylated (O-linked (Xyl...) (heparan sulfate) serine). Residues 517–527 show a composition bias toward pro residues; the sequence is VVPPARPPRPP. A lipid anchor (GPI-anchor amidated serine) is attached at Ser556. The propeptide at 557-579 is removed in mature form; it reads SVGLHTPLVLLLLPSALTLLVLR.

It belongs to the glypican family. In terms of assembly, interacts (via heparan sulfate) with PTN; this interaction promotes neurite outgrowth through binding of PTN with chondroitin sulfate of proteoglycans, thereby releasing PTPRS of chondroitin sulfate proteoglycans (CSPGs) and leading to binding with heparan sulfate of GPC2. Interacts (heparan sulfate chain) with MDK; this interaction is inhibited by heparin followed by chondroitin sulfate E; this interaction induces GPC2 clustering through heparan sulfate chain; this interaction induces neuronal cell adhesion and neurite outgrowth.

The protein localises to the cell membrane. Its subcellular location is the secreted. It is found in the extracellular space. Cell surface proteoglycan that bears heparan sulfate. May fulfill a function related to the motile behaviors of developing neurons. The sequence is that of Glypican-2 (Gpc2) from Mus musculus (Mouse).